Reading from the N-terminus, the 3092-residue chain is Probable polyketide synthase 45 (3092 aa).

The 421-residue stretch at 10–430 folds into the Ketosynthase family 3 (KS3) domain; it reads DNDVAIIGIG…GSNVCLILTE (421 aa). Catalysis depends on for beta-ketoacyl synthase activity residues cysteine 170, histidine 315, and histidine 353. The acyl/malonyl transferase stretch occupies residues 640 to 673; sequence GILASISIGHSLGEVSSAVCSGMIDLETGCFIIY. The active-site For acyl/malonyl transferase activity is serine 650. The interval 967–1087 is N-terminal hotdog fold; that stretch reads INQLGNRNER…GKFSITKHND (121 aa). A PKS/mFAS DH domain is found at 967 to 1254; sequence INQLGNRNER…YTQLTPYKNQ (288 aa). Histidine 999 serves as the catalytic Proton acceptor; for dehydratase activity. Positions 1103 to 1254 are C-terminal hotdog fold; it reads NFVTIQKKEL…YTQLTPYKNQ (152 aa). Catalysis depends on aspartate 1165, which acts as the Proton donor; for dehydratase activity. The Carrier domain occupies 2566–2644; it reads SDDLSIREEI…QLIQSVTDAM (79 aa). Residue serine 2604 is modified to O-(pantetheine 4'-phosphoryl)serine. The chain crosses the membrane as a helical span at residues 2705 to 2725; the sequence is NTVFLTGSSGFIGIYILFYLI.

Pantetheine 4'-phosphate is required as a cofactor.

Its subcellular location is the membrane. In terms of biological role, probable polyketide synthase. The polypeptide is Probable polyketide synthase 45 (pks45) (Dictyostelium discoideum (Social amoeba)).